Consider the following 1062-residue polypeptide: MPHLPLASFRPPLRGLRPTRCFPRSHSLSTQSEPHGSPISRRNREAKQKRLREKQAALETGIAAKGKPPAESTKAWTPKEIVLYEIPTEHGEKKDVSRPLPPAYSPRYVEAAWYPWWVREGFFKPEYQTRLPQATGETFSMCIPPPNVTGSLHIGHALTVAIQDALVRWHRMRGDRVLWVPGSDHAGIATQAVVEKKLWKERGLRRRELSREDFLREVWKWKEEKGGEICQQLRVLGASLDWDRECFTMDAGSSVAVTEAFVRLYKAGLLYRSRQLVNWSCALRSAISDIEVESRPLSGRTELRLPGCPTPVSFGLLVSVAFPVDGEPDAEVVVGTTRPETLPGDVAVAVHPDDARYTHLHGRQLHHPLTGQLLPLITDCAVQPHLGTGAVKVTPAHSPADAELGARHGLSPLSVIAEDGTMTSLCGDWLQGLHRFVAREKIVSALRERGLFRGLQNHPMVLPICSRSGDVVEYLLKSQWFVRCQEMGEQAAKAVVSGALELSPSFHQKNWQHWFSHIGDWCVSRQLWWGHRIPAYLVVEERAKGNTEDCWVVGRTEAEAREVAAELTGRPGAELTLERDPDVLDTWFSSALFPFSALGWPQETPDLARFYPLSLLETGSDLLLFWVGRMVMLGTQLTGQLPFSKVLLHSMVRDRQGRKMSKSLGNVLDPRDIINGVELQVLQEKLRDGNLDPAELAIAAAAQKKDFPHGIPECGTDALRFTLCSHGVLGGDLHLSVSEVLSFRHFCNKIWNALRFILNALGEKFIPQPLEELCPTSPMDAWILSCLARTAQECERGFLTRELALVTHALHHFWLHNLCDVYLEAVKPVLSHSPRPPGPPQVLFSCADVGLRLLAPLMPFLAEELWQRLPLRPGNTTAPSICVAPYPSAHSLEHWHQPELERRFSRVQEAVQALRALRATYQLTKARPRVLLQTSEPGEQGLFEAFLGPLSTLGHCGAVGFLPPGAAAPSSWAQASLSDTAQVYMELQGLVDPQTHLPRLAARRQKLQKQLDSLLARTPSEGEAESQSQQRLSSLQLELSKLDKAASHLRQLMDASPSPGEL.

The N-terminal 15 residues, 1–15 (MPHLPLASFRPPLRG), are a transit peptide targeting the mitochondrion. Residues 1 to 73 (MPHLPLASFR…AKGKPPAEST (73 aa)) are disordered. Positions 42-56 (RNREAKQKRLREKQA) are enriched in basic and acidic residues. Positions 146 to 156 (PNVTGSLHIGH) match the 'HIGH' region motif. The 'KMSKS' region motif lies at 659–663 (KMSKS). Lys662 contributes to the ATP binding site.

Belongs to the class-I aminoacyl-tRNA synthetase family.

Its subcellular location is the mitochondrion. The catalysed reaction is tRNA(Val) + L-valine + ATP = L-valyl-tRNA(Val) + AMP + diphosphate. Its function is as follows. Catalyzes the attachment of valine to tRNA(Val) in a two-step reaction: valine is first activated by ATP to form Val-AMP and then transferred to the acceptor end of tRNA(Val). This Sus scrofa (Pig) protein is Valine--tRNA ligase, mitochondrial (VARS2).